The primary structure comprises 279 residues: MAIEFTKYHGLGNDFILIDNRSSSLPVLTPEQAIQLCDRHFGIGADGVIFALPGENGTDYTMRIFNSDGSEPEMCGNGIRCLAGFLADLEGQSRNKDSYRIHTLGGVMTPQLLSDGLVKVDMGLPRLLAGEIPTTLAPVEEKVISVPLEVAGKTWEVTCVNMGNPHCITFVEDVAAIELESIGPKFEHHPAFPQRINTEFIQVVRRDYLKMRVWERGAGITLACGTGACASLVAGVLTGKCDRTATVELPGGPLQIEWSEIDQRVYMTGPAERVFTGKL.

Residues Asn-13 and Asn-66 each contribute to the substrate site. Cys-75 serves as the catalytic Proton donor. Substrate is bound by residues 76-77, Asn-164, Asn-197, and 215-216; these read GN and ER. Catalysis depends on Cys-224, which acts as the Proton acceptor. Residue 225–226 coordinates substrate; that stretch reads GT.

This sequence belongs to the diaminopimelate epimerase family. In terms of assembly, homodimer.

The protein resides in the cytoplasm. It catalyses the reaction (2S,6S)-2,6-diaminopimelate = meso-2,6-diaminopimelate. It participates in amino-acid biosynthesis; L-lysine biosynthesis via DAP pathway; DL-2,6-diaminopimelate from LL-2,6-diaminopimelate: step 1/1. In terms of biological role, catalyzes the stereoinversion of LL-2,6-diaminopimelate (L,L-DAP) to meso-diaminopimelate (meso-DAP), a precursor of L-lysine and an essential component of the bacterial peptidoglycan. The chain is Diaminopimelate epimerase from Nostoc punctiforme (strain ATCC 29133 / PCC 73102).